The primary structure comprises 640 residues: Protelomerase (640 aa).

The DNA site is built by Arg275, Lys300, Arg383, and His416. Catalysis depends on Tyr425, which acts as the Nucleophile. A compositionally biased stretch (acidic residues) spans 545–585; sequence VDLDDENHDDETLDDDEIEVDESEGEELEEAGDAEEAEVAE. The tract at residues 545-605 is disordered; it reads VDLDDENHDD…FKAPRDNGDG (61 aa).

The protein belongs to the Caudoviricetes Protelomerase family. Monomer. Homodimer; in presence of DNA.

In terms of biological role, converts the circular intermediates produced by the viral replication and carrying a joined telomere site to a linear DNA molecule with covalently closed hairpin ends. The viral circular DNA is cleaved at a palindromic site called telRL thereby generating a linear prophage plasmid with telomeres. Binds covalently to the 3'-phosphoryl of the cleaved strands. The sequence is that of Protelomerase from Klebsiella oxytoca (Bacteriophage phiKO2).